Reading from the N-terminus, the 356-residue chain is uncharacterized protein (356 aa).

6 helical membrane-spanning segments follow: residues 2 to 22 (FEAI…FHRL), 35 to 55 (EYVT…PIPF), 76 to 96 (NMIY…FIFG), 99 to 119 (IIYG…GPFL), 124 to 144 (IISL…LALL), and 151 to 171 (VEIL…AITF). Residues 218–353 (QSLALLLIDI…GRNKVMFNPI (136 aa)) form the GGDEF domain.

The protein localises to the cell membrane. This is an uncharacterized protein from Staphylococcus epidermidis (strain ATCC 35984 / DSM 28319 / BCRC 17069 / CCUG 31568 / BM 3577 / RP62A).